Here is a 228-residue protein sequence, read N- to C-terminus: Protein-L-isoaspartate O-methyltransferase (228 aa).

S74 is a catalytic residue.

This sequence belongs to the methyltransferase superfamily. L-isoaspartyl/D-aspartyl protein methyltransferase family.

The protein resides in the cytoplasm. It carries out the reaction [protein]-L-isoaspartate + S-adenosyl-L-methionine = [protein]-L-isoaspartate alpha-methyl ester + S-adenosyl-L-homocysteine. In terms of biological role, catalyzes the methyl esterification of L-isoaspartyl residues in peptides and proteins that result from spontaneous decomposition of normal L-aspartyl and L-asparaginyl residues. It plays a role in the repair and/or degradation of damaged proteins. The chain is Protein-L-isoaspartate O-methyltransferase from Methylorubrum extorquens (strain PA1) (Methylobacterium extorquens).